A 478-amino-acid polypeptide reads, in one-letter code: Solute carrier family 7 member 13 (478 aa).

The Cytoplasmic portion of the chain corresponds to 1-14; the sequence is MAMDSKKEIRLKRE. The helical transmembrane segment at 15-35 threads the bilayer; it reads LGYFWGTNFLIINIIGAGIFV. Residues 36–47 are Extracellular-facing; the sequence is SPKGVLQHSSMN. A helical membrane pass occupies residues 48–68; it reads VGVSLCVWAVCAVLTLTSALC. At 69–89 the chain is on the cytoplasmic side; sequence SAEIGITFPYSGAHYYFLKRC. The helical transmembrane segment at 90 to 110 threads the bilayer; the sequence is FGPLVAFLRLWTSLFLGPGLI. Topologically, residues 111–129 are extracellular; the sequence is ASQALLLAEYGVQPFYPSC. A helical transmembrane segment spans residues 130–150; that stretch reads SAPILPRKCLALAMLWIVGIL. Topologically, residues 151–163 are cytoplasmic; that stretch reads NSRGVKELSWLQT. A helical membrane pass occupies residues 164-184; the sequence is VSSVLKVGILGVISLSGLFLL. The Extracellular segment spans residues 185–208; the sequence is VRGKKENVQRLQNAFDAEFPEVSQ. The helical transmembrane segment at 209–229 threads the bilayer; sequence LIEAIFQGYFAFSGGGCFTCI. At 230–242 the chain is on the cytoplasmic side; it reads AGELKKPSKTIPR. Residues 243-263 traverse the membrane as a helical segment; the sequence is CIFTGLPLVTVVYLLANISYL. Topologically, residues 264–288 are extracellular; it reads TVLTPQEMLSSDAVALTWTDRVIPQ. The helical transmembrane segment at 289 to 309 threads the bilayer; sequence FTWTVPFAISASLFINLVINV. The Cytoplasmic segment spans residues 310 to 338; sequence LETSRVLYIASENGQLPLLFCALNVHSSP. The helical transmembrane segment at 339 to 359 threads the bilayer; the sequence is FIAVLLIISMASILIVLTNLI. Residue Asp-360 is a topological domain, extracellular. Residues 361 to 381 traverse the membrane as a helical segment; it reads LINYLYFVVSIWTALSIIGIL. Topologically, residues 382-395 are cytoplasmic; that stretch reads KLRYQEPNLHRPYK. Residues 396–416 traverse the membrane as a helical segment; the sequence is VFLPFTFIALGITLSLVLIPL. Over 417–423 the chain is Extracellular; it reads VKSPKLH. Residues 424 to 444 form a helical membrane-spanning segment; that stretch reads YIYVFLFLLSGLVFYVPLIHF. The Cytoplasmic portion of the chain corresponds to 445–478; it reads KVKFVWFQKLTCYLQLLFNICIPDVSDDHIHEES.

Belongs to the amino acid-polyamine-organocation (APC) superfamily. Disulfide-linked heterodimer composed of the catalytic light subunit SLC7A13 and the heavy subunit SLC3A1. Expressed in renal tubules in the outer stripe of the outer medulla and medullary ray (at protein level). Detected in male but not in female kidney.

The protein resides in the apical cell membrane. The catalysed reaction is L-cystine(out) + L-aspartate(in) = L-cystine(in) + L-aspartate(out). It carries out the reaction L-cystine(out) = L-cystine(in). The enzyme catalyses L-aspartate(in) + L-glutamate(out) = L-aspartate(out) + L-glutamate(in). It catalyses the reaction L-aspartate(in) + L-glutamine(out) = L-aspartate(out) + L-glutamine(in). The catalysed reaction is L-aspartate(in) + L-methionine(out) = L-aspartate(out) + L-methionine(in). It carries out the reaction L-leucine(out) + L-aspartate(in) = L-leucine(in) + L-aspartate(out). The enzyme catalyses L-valine(out) + L-aspartate(in) = L-valine(in) + L-aspartate(out). It catalyses the reaction L-aspartate(in) + L-phenylalanine(out) = L-aspartate(out) + L-phenylalanine(in). The catalysed reaction is L-tyrosine(out) + L-aspartate(in) = L-tyrosine(in) + L-aspartate(out). It carries out the reaction L-tryptophan(out) + L-aspartate(in) = L-tryptophan(in) + L-aspartate(out). In terms of biological role, associates with SLC3A1/rBAT to form a functional heterodimeric complex that transports anionic and neutral amino acids across the apical plasma membrane of renal epithelium. Preferentially mediates exchange transport, but can also operate via facilitated diffusion. May act as a major transporter for L-cystine in late proximal tubules, ensuring its reabsorption from the luminal fluid in exchange for cytosolic L-glutamate or L-aspartate. The chain is Solute carrier family 7 member 13 from Mus musculus (Mouse).